A 136-amino-acid polypeptide reads, in one-letter code: Snaclec rhodocytin subunit alpha (136 aa).

Disulfide bonds link C5–C16, C33–C131, and C106–C123. The 121-residue stretch at 12–132 (YDQHCYQAFN…CEQMHAFVCK (121 aa)) folds into the C-type lectin domain.

It belongs to the snaclec family. As to quaternary structure, dimer (non-covalently linked) of heterodimers of subunits alpha and beta (disulfide-linked). Expressed by the venom gland.

It is found in the secreted. Its function is as follows. Elicits platelet aggregation by the binding to the C-type lectin domain family 1 member B (CLEC1B/CLEC2). Binding leads to tyrosine phosphorylation in the cytoplasmic tail of CLEC1B, which promotes the binding of spleen tyrosine kinase (Syk), subsequent activation of PLC-gamma-2, and platelet activation and aggregation. Binding to GPIbalpha (GP1BA) and alpha-2/beta-1 (ITGA2/ITGB1) may also induce aggregation, but this is controversial. This chain is Snaclec rhodocytin subunit alpha, found in Calloselasma rhodostoma (Malayan pit viper).